The following is a 1940-amino-acid chain: Myosin-3 (1940 aa).

The region spanning 33–82 is the Myosin N-terminal SH3-like domain; the sequence is DAKTYCFVVDSKEEYAKGKIKSSQDGKVTVETEDNRTLVVKPEDVYAMNP. Residues 86–779 enclose the Myosin motor domain; sequence DKIEDMAMLT…LLGTLEEMRD (694 aa). At K130 the chain carries N6,N6,N6-trimethyllysine. 179-186 is an ATP binding site; that stretch reads GESGAGKT. Actin-binding stretches follow at residues 656-678 and 758-772; these read LNKL…IPNE and KFGH…GLLG. Residues 782 to 811 enclose the IQ domain; the sequence is LAKLITRTQAVCRGFLMRVEFQKMMQRRES. A coiled-coil region spans residues 840 to 1933; it reads LLKSAETEKE…KTRDFTSSRM (1094 aa). Positions 1260–1289 are disordered; the sequence is ARGKNEETQRSLSELTTQKSRLQTEAGELS. Polar residues predominate over residues 1269 to 1282; it reads RSLSELTTQKSRLQ.

The protein belongs to the TRAFAC class myosin-kinesin ATPase superfamily. Myosin family. In terms of assembly, muscle myosin is a hexameric protein that consists of 2 heavy chain subunits (MHC), 2 alkali light chain subunits (MLC) and 2 regulatory light chain subunits (MLC-2).

Its subcellular location is the cytoplasm. It is found in the myofibril. Muscle contraction. The polypeptide is Myosin-3 (Myh3) (Rattus norvegicus (Rat)).